We begin with the raw amino-acid sequence, 804 residues long: DNA mismatch repair protein MutS (804 aa).

614–621 (GPNMAGKS) provides a ligand contact to ATP.

Belongs to the DNA mismatch repair MutS family.

Its function is as follows. This protein is involved in the repair of mismatches in DNA. It is possible that it carries out the mismatch recognition step. This protein has a weak ATPase activity. The chain is DNA mismatch repair protein MutS from Ehrlichia ruminantium (strain Welgevonden).